The primary structure comprises 371 residues: Protein STRICTOSIDINE SYNTHASE-LIKE 6 (371 aa).

Positions 1 to 21 (MPVFLSSRFLFFCIIVPLLIS) are cleaved as a signal peptide. Asn101 and Asn137 each carry an N-linked (GlcNAc...) asparagine glycan. Tyr303 carries the phosphotyrosine modification.

This sequence belongs to the strictosidine synthase family.

It localises to the vacuole. The protein is Protein STRICTOSIDINE SYNTHASE-LIKE 6 of Arabidopsis thaliana (Mouse-ear cress).